The chain runs to 196 residues: Small ribosomal subunit protein uS4c (196 aa).

The segment at 17–38 (ALPGLTRKTPKSRSNLKKKFHS) is disordered. Over residues 24-38 (KTPKSRSNLKKKFHS) the composition is skewed to basic residues. Residues 89-169 (MRLDNILFRL…LPKHLTIDTL (81 aa)) form the S4 RNA-binding domain.

This sequence belongs to the universal ribosomal protein uS4 family. Part of the 30S ribosomal subunit. Contacts protein S5. The interaction surface between S4 and S5 is involved in control of translational fidelity.

The protein localises to the plastid. Its subcellular location is the chloroplast. Its function is as follows. One of the primary rRNA binding proteins, it binds directly to 16S rRNA where it nucleates assembly of the body of the 30S subunit. In terms of biological role, with S5 and S12 plays an important role in translational accuracy. In Lygeum spartum, this protein is Small ribosomal subunit protein uS4c (rps4).